The chain runs to 1450 residues: MEAGYAEIAAVQFNIAGDNDHKRQGVMEVTISNLFEGTLPAEGGIYDARMGTTDHHYKCITCSHQRKQCMGHPGILQMHAPVLQPLFIAEIRRWLRVICLNCGAPIVDLKRYEHLIRPKRLAEAASSQTEGKQCYVCKVIHPKIIKDSEDYFTFWVDQQGKIDKLYPQIIREIFSRVTYDTVVKLGRSKNSHPEKLVLKAIQIPPISIRPGIRLGIGSGPQSFHDINNVIQYIVRKNLLIPKDLQIVRGQKIPLNVDRNLQTIQQLYYNFLLDSVSTTATQGGTGKRGIVMGARPAPSIMRRLPRKEGRIRKSLLGSQVWSISRSTICGNSDLHLDEVGYPISFARTLQVAETVQHYNINRLMPYFLNGKRQYPGCSRVYKQITQSVHDIEGLKQDFRLEVGDILYRDVVTGDVAFFNRQPSLERSSIGVHRIVVLENPKISTFQMNVSACAWYNADFDGDQMNLWVPWSVMSRVEAELLCSVRNWFISTKSSGPVNGQVQDSTVGSFLLTRTNTPMGKNVMNKLHAMGLFQTTQTDPPCFANYSPTDLLDGKLVVSMLLKQTPINYQRAPTWYSEVYAPYMHYNKQDISTQIRNGELIEGVLDKKAVGAGSSGGIYHLISRRYGPQQALKMIFATQQLALNYVRNAGFTVSTADMLLTPEAHQEVQEIINELLLESEEINNRLLHGDIMPPIGLTTHDFYEKLQLNALKFPDRILKPIMNSINPETNGLFQMVATGAKGSNPNMIHIMAGIGQIEINTQRIQPQFSFGRTLVYYPRFALEAQAYGFICNSYIAGLTSPEFIFGEMNGRFDLINKALSTSSTGYANRKAIFGLQSCIVDYYRRVSIDTRLVQQLYGEDGLDARQLETVRFETIMLSDQELEDKFKYTGIQSPLFEEEFSRLKKDRDKYRQIFLNIENFNFSQLLTDVRQVPVNVASIVKNILLSSTSGVLPFDEKSILQKYTMVKTFCKNLPYVFINNIQERLQTPIPVYLKRAASLMRILIRIELATVKTLNITCEQMSAILDLIRLQYTQSLINYGEAVGILAAQSVSEPLTQYMLDSHHRSVAGGTNKSGIVRPQEIFSAKPVEAEQSSEMLLRLKNPEVETNKTYAQEIANSIELITFERLILQWHLLYETYSSTKKNVMYPDFASDVEWMTDFLENHPLLQPPEDIANWCIRLELNKTTMILKSISLESIVNSLRAKHPNTYIMHSVENTASGIPIIIRIYLRESAFRRSTNTRMATDEKIAVNLVDKLLNSTIRGIPGIKNANVVKLMRHRVDAQGKLVRLDNIYAIKTNGTNIFGAMLDDNIDPYTIVSSSIGDTMELYGIEAARQKIISEIRTVMGDKGPNHRHLLMYADLMTRTGQVTSLEKAGLNAREPSNVLLRMALSSPVQVLTDAAIDSAVNPIYGIAAPTLMGSVPRIGTMYSDIIMDEKYITENYKSVDSMIDML.

This sequence belongs to the RNA polymerase beta' chain family. Part of the viral DNA-directed RNA polymerase that consists of 8 polII-like subunits (RPB1, RPB2, RPB3, RPB5, RPB6, RPB7, RPB9, RPB10), a capping enzyme and a termination factor.

Its subcellular location is the virion. It carries out the reaction RNA(n) + a ribonucleoside 5'-triphosphate = RNA(n+1) + diphosphate. In terms of biological role, catalytic component of the DNA-directed RNA polymerase (RNAP) that catalyzes the transcription in the cytoplasm of viral DNA into RNA using the four ribonucleoside triphosphates as substrates. Forms the polymerase active center together with RPB2. Part of the core element with the central large cleft, the clamp element that moves to open and close the cleft and the jaws that are thought to grab the incoming DNA template. The protein is DNA-directed RNA polymerase RPB1 homolog of African swine fever virus (isolate Pig/Kenya/KEN-50/1950) (ASFV).